A 396-amino-acid polypeptide reads, in one-letter code: Probable tRNA sulfurtransferase (396 aa).

Residues 58–169 enclose the THUMP domain; it reads NQFIEKLKMV…KKNIYVFTRS (112 aa). Residues 187 to 188, 212 to 213, Arg269, Gly291, and Gln300 each bind ATP; these read LL and YF.

This sequence belongs to the ThiI family.

The protein localises to the cytoplasm. The catalysed reaction is [ThiI sulfur-carrier protein]-S-sulfanyl-L-cysteine + a uridine in tRNA + 2 reduced [2Fe-2S]-[ferredoxin] + ATP + H(+) = [ThiI sulfur-carrier protein]-L-cysteine + a 4-thiouridine in tRNA + 2 oxidized [2Fe-2S]-[ferredoxin] + AMP + diphosphate. It catalyses the reaction [ThiS sulfur-carrier protein]-C-terminal Gly-Gly-AMP + S-sulfanyl-L-cysteinyl-[cysteine desulfurase] + AH2 = [ThiS sulfur-carrier protein]-C-terminal-Gly-aminoethanethioate + L-cysteinyl-[cysteine desulfurase] + A + AMP + 2 H(+). It participates in cofactor biosynthesis; thiamine diphosphate biosynthesis. In terms of biological role, catalyzes the ATP-dependent transfer of a sulfur to tRNA to produce 4-thiouridine in position 8 of tRNAs, which functions as a near-UV photosensor. Also catalyzes the transfer of sulfur to the sulfur carrier protein ThiS, forming ThiS-thiocarboxylate. This is a step in the synthesis of thiazole, in the thiamine biosynthesis pathway. The sulfur is donated as persulfide by IscS. In Halothermothrix orenii (strain H 168 / OCM 544 / DSM 9562), this protein is Probable tRNA sulfurtransferase.